The chain runs to 324 residues: Probable 6-phosphogluconolactonase 4, chloroplastic (324 aa).

A chloroplast-targeting transit peptide spans 1–61 (MSVSAAVAAA…RAPAMATDCA (61 aa)). The segment at 20-43 (RRRSPPASRVAATSRGRPFSSGPH) is disordered. A compositionally biased stretch (low complexity) spans 24–34 (PPASRVAATSR).

Belongs to the glucosamine/galactosamine-6-phosphate isomerase family. 6-phosphogluconolactonase subfamily.

It is found in the plastid. The protein localises to the chloroplast. It catalyses the reaction 6-phospho-D-glucono-1,5-lactone + H2O = 6-phospho-D-gluconate + H(+). It participates in carbohydrate degradation; pentose phosphate pathway; D-ribulose 5-phosphate from D-glucose 6-phosphate (oxidative stage): step 2/3. Hydrolysis of 6-phosphogluconolactone to 6-phosphogluconate. The polypeptide is Probable 6-phosphogluconolactonase 4, chloroplastic (Oryza sativa subsp. indica (Rice)).